Reading from the N-terminus, the 134-residue chain is Prefoldin subunit 4 (134 aa).

The residue at position 2 (Ala-2) is an N-acetylalanine. At Ser-125 the chain carries Phosphoserine.

Belongs to the prefoldin subunit beta family. As to quaternary structure, heterohexamer of two PFD-alpha type and four PFD-beta type subunits. Interacts with URI1; the interaction is phosphorylation-dependent and occurs in a growth-dependent manner.

Its subcellular location is the nucleus. The protein localises to the cytoplasm. It localises to the mitochondrion. Functionally, binds specifically to cytosolic chaperonin (c-CPN) and transfers target proteins to it. Binds to nascent polypeptide chain and promotes folding in an environment in which there are many competing pathways for nonnative proteins. The chain is Prefoldin subunit 4 (PFDN4) from Bos taurus (Bovine).